The chain runs to 252 residues: MKKPLNKLEIKNLTFKNKNDDYIILKNLNLDINSDKVLFLLGSSGQGKSSLLKTILKQTDVIEGTILFNKQDIFQLNKKEWKSFLKEVSFLNQTTTSIPFETVFTNIVRSLQDYKNLFYNIFNLVSKSQKEEITSVLKELNILDKIYHRVDSLSGGQQQRVEIAKLMMQKPKIIIADEPTNFLDPNISKNIIELIIKMAKKFNSILIIVTHNVNLIHEFDSSILLIKNQEYHFYKSNKEINSNILDQVFKND.

The region spanning leucine 8 to aspartate 252 is the ABC transporter domain. An ATP-binding site is contributed by glycine 42 to serine 49.

It belongs to the ABC transporter superfamily.

In terms of biological role, part of a high-affinity transport system. This Mesomycoplasma hyorhinis (Mycoplasma hyorhinis) protein is Probable ABC transporter ATP-binding protein p29.